Here is a 174-residue protein sequence, read N- to C-terminus: MTSTVNLGSDTASKRTVIKSRCNSCCRILVSCVAVICAILALIFLVATIGLSVKLAFTVQEVHNCKQKLSGASTTTAAIYTTPSTMIEALQTNQLKLTTNERRSTPPDCLVEKKLCEGEVRYLKTKGCLGAREGEDLNCIDLVVECVGKPCGHNEDYKECICTNNGTATKCCYN.

The chain crosses the membrane as a helical span at residues 33–53 (VAVICAILALIFLVATIGLSV). N-linked (GlcNAc...) asparagine; by host glycosylation is present at N165.

It is found in the membrane. In Meleagris gallopavo (Wild turkey), this protein is Small hydrophobic protein (SH).